A 443-amino-acid polypeptide reads, in one-letter code: Xaa-Pro dipeptidase (443 aa).

Residues Asp-246, Asp-257, His-339, Glu-384, and Glu-423 each coordinate Mn(2+).

It belongs to the peptidase M24B family. Bacterial-type prolidase subfamily. It depends on Mn(2+) as a cofactor.

The catalysed reaction is Xaa-L-Pro dipeptide + H2O = an L-alpha-amino acid + L-proline. Its function is as follows. Splits dipeptides with a prolyl residue in the C-terminal position. In Salmonella choleraesuis (strain SC-B67), this protein is Xaa-Pro dipeptidase.